A 427-amino-acid polypeptide reads, in one-letter code: 3-phosphoshikimate 1-carboxyvinyltransferase (427 aa).

Positions 22, 23, and 27 each coordinate 3-phosphoshikimate. Lys22 contacts phosphoenolpyruvate. Residues Gly96 and Arg124 each coordinate phosphoenolpyruvate. Positions 169, 170, 171, 197, 313, 336, and 340 each coordinate 3-phosphoshikimate. Residue Gln171 participates in phosphoenolpyruvate binding. Asp313 (proton acceptor) is an active-site residue. Positions 344, 386, and 411 each coordinate phosphoenolpyruvate.

It belongs to the EPSP synthase family. Monomer.

The protein resides in the cytoplasm. It carries out the reaction 3-phosphoshikimate + phosphoenolpyruvate = 5-O-(1-carboxyvinyl)-3-phosphoshikimate + phosphate. It functions in the pathway metabolic intermediate biosynthesis; chorismate biosynthesis; chorismate from D-erythrose 4-phosphate and phosphoenolpyruvate: step 6/7. In terms of biological role, catalyzes the transfer of the enolpyruvyl moiety of phosphoenolpyruvate (PEP) to the 5-hydroxyl of shikimate-3-phosphate (S3P) to produce enolpyruvyl shikimate-3-phosphate and inorganic phosphate. The sequence is that of 3-phosphoshikimate 1-carboxyvinyltransferase from Salmonella typhimurium (strain LT2 / SGSC1412 / ATCC 700720).